Reading from the N-terminus, the 62-residue chain is Regulator of rDNA transcription protein 15 (62 aa).

Belongs to the ART2/RRT15 family.

Functionally, involved in modulation of rDNA transcription. This is Regulator of rDNA transcription protein 15 (RRT15) from Saccharomyces cerevisiae (strain ATCC 204508 / S288c) (Baker's yeast).